The sequence spans 210 residues: Small ribosomal subunit protein uS3 (210 aa).

A KH type-2 domain is found at 17-86 (IDEFLEKELR…NPQIEVEEIK (70 aa)).

The protein belongs to the universal ribosomal protein uS3 family. In terms of assembly, part of the 30S ribosomal subunit.

Binds the lower part of the 30S subunit head. The sequence is that of Small ribosomal subunit protein uS3 from Pyrococcus furiosus (strain ATCC 43587 / DSM 3638 / JCM 8422 / Vc1).